Reading from the N-terminus, the 394-residue chain is Serine palmitoyltransferase (394 aa).

Pyridoxal 5'-phosphate is bound by residues 111-112 (GF), Ser183, His211, and Thr239. The residue at position 242 (Lys242) is an N6-(pyridoxal phosphate)lysine.

It belongs to the class-II pyridoxal-phosphate-dependent aminotransferase family. Pyridoxal 5'-phosphate is required as a cofactor.

It carries out the reaction L-serine + hexadecanoyl-CoA + H(+) = 3-oxosphinganine + CO2 + CoA. Its pathway is lipid metabolism; sphingolipid metabolism. In terms of biological role, involved in de novo bacterial ceramide synthesis. Catalyzes the condensation of L-serine with palmitoyl-CoA (hexadecanoyl-CoA) to produce 3-oxosphinganine. Also capable of using alanine as substrate leading to the formation of 1-deoxysphinganine (1-deoxySa). Contributes to the levels of endogenous sphingolipids in its host. The sequence is that of Serine palmitoyltransferase from Bacteroides ovatus (strain ATCC 8483 / DSM 1896 / JCM 5824 / BCRC 10623 / CCUG 4943 / NCTC 11153).